Consider the following 152-residue polypeptide: MGALNYLSEYFSNHFYVSIRKRKKRKVMQTVNIKVKIDCDGCERKIKNAVSSIKGAKSVEVNRKMHKVTVSGYVDPKKVLKTVQSTGKKKAELWPYVPYTMVAYPYAAGAYDKRAPPGFVRKSEQAQAQPGSTDDKLMSLFSDENPNACTVM.

The HMA domain maps to 28–91 (MQTVNIKVKI…TVQSTGKKKA (64 aa)). A metal cation contacts are provided by Cys-39 and Cys-42. The tract at residues 123-152 (SEQAQAQPGSTDDKLMSLFSDENPNACTVM) is disordered. Residues 142–152 (SDENPNACTVM) are compositionally biased toward polar residues. A Cysteine methyl ester modification is found at Cys-149. Cys-149 is lipidated: S-farnesyl cysteine. Residues 150 to 152 (TVM) constitute a propeptide, removed in mature form.

This sequence belongs to the HIPP family. As to quaternary structure, interacts with ZHD11/HB29. Expressed in lateral roots and mature anthers.

The protein localises to the membrane. Its function is as follows. Heavy-metal-binding protein. Binds cadmium. May be involved in cadmium transport and play a role in cadmium detoxification. This is Heavy metal-associated isoprenylated plant protein 22 from Arabidopsis thaliana (Mouse-ear cress).